The chain runs to 1411 residues: Tectonin beta-propeller repeat-containing protein 2 (1411 aa).

WD repeat units follow at residues 23-66 (IPTK…HLNQ), 67-114 (MRKY…PGRN), 115-161 (KQLR…LDQG), 162-203 (LCNS…EKSV), 204-265 (RQIG…AGGV), 266-309 (KPFE…EYSI), and 310-343 (YLLDTVNQATVAGLEGSGDIVSVSCTENEIFFLK). Disordered regions lie at residues 379 to 439 (QAEK…GSQP), 463 to 542 (VKRK…QENT), 579 to 637 (RELL…GPQS), and 758 to 779 (YAHGLPSSSSETSVTELGPSCS). Residues 400–420 (SSVASEPRSRSSSLNSTDSGS) are compositionally biased toward low complexity. Composition is skewed to polar residues over residues 475–489 (GSRSTCHSSLESTPC), 496–542 (SPQS…QENT), 608–621 (PNSTQLPFQEQDSS), and 763–779 (PSSSSETSVTELGPSCS). TECPR repeat units lie at residues 945–976 (NVVWALTEQRALLYREGVSSFCPEGEQWKCDI), 994–1027 (QTLWALDIHGNLWFRTGIISKKPQGDDDHWWQVS), 1179–1209 (DALWALDSLGQVFIRTLSKSCPTGMHWTRLD), 1226–1259 (QHIWACDSRGGVYFRVGTQPLNPSLMLPAWIMIE), 1279–1310 (QMLWVLDSRWNVHVRTGITEEMPVGTAWEHVP), and 1322–1353 (RTVWARCPNGDLARRYGVTDKNPAGDYWKKIP). Positions 1388–1411 (HGTQKSSQAAMPHPEDLEDEWEVI) are disordered.

This sequence belongs to the WD repeat KIAA0329 family. Interacts with the ATG8 family members GABARAP, GABARAPL1, GABARAPL2, MAP1LC3B and MAP1LC3C. In terms of tissue distribution, detected in skin fibroblast (at protein level).

In terms of biological role, probably plays a role as positive regulator of autophagy. The polypeptide is Tectonin beta-propeller repeat-containing protein 2 (TECPR2) (Homo sapiens (Human)).